Consider the following 150-residue polypeptide: Large ribosomal subunit protein uL15 (150 aa).

The tract at residues Met1–Met57 is disordered. Positions Gly13–Arg23 are enriched in basic residues. The span at Ile25–Met37 shows a compositional bias: gly residues.

This sequence belongs to the universal ribosomal protein uL15 family. In terms of assembly, part of the 50S ribosomal subunit.

Binds to the 23S rRNA. This Prochlorococcus marinus (strain NATL1A) protein is Large ribosomal subunit protein uL15.